The primary structure comprises 392 residues: 8-amino-7-oxononanoate synthase (392 aa).

Arg21 contributes to the substrate binding site. 114–115 (GY) is a pyridoxal 5'-phosphate binding site. Position 139 (His139) interacts with substrate. Residues Ser187, 212–215 (DEAH), and 243–246 (TFGK) each bind pyridoxal 5'-phosphate. Lys246 is subject to N6-(pyridoxal phosphate)lysine. Thr359 contributes to the substrate binding site.

Belongs to the class-II pyridoxal-phosphate-dependent aminotransferase family. BioF subfamily. As to quaternary structure, homodimer. Pyridoxal 5'-phosphate serves as cofactor.

It catalyses the reaction 6-carboxyhexanoyl-[ACP] + L-alanine + H(+) = (8S)-8-amino-7-oxononanoate + holo-[ACP] + CO2. Its pathway is cofactor biosynthesis; biotin biosynthesis. Functionally, catalyzes the decarboxylative condensation of pimeloyl-[acyl-carrier protein] and L-alanine to produce 8-amino-7-oxononanoate (AON), [acyl-carrier protein], and carbon dioxide. The chain is 8-amino-7-oxononanoate synthase from Chlorobaculum parvum (strain DSM 263 / NCIMB 8327) (Chlorobium vibrioforme subsp. thiosulfatophilum).